A 394-amino-acid chain; its full sequence is Argininosuccinate synthase (394 aa).

8-16 (AYSGGLDTS) is an ATP binding site. 2 residues coordinate L-citrulline: Tyr-86 and Ser-91. Gly-116 contributes to the ATP binding site. L-aspartate is bound by residues Thr-118, Asn-122, and Asp-123. Asn-122 contributes to the L-citrulline binding site. Residues Arg-126, Ser-172, Ser-181, Glu-256, and Tyr-268 each contribute to the L-citrulline site.

This sequence belongs to the argininosuccinate synthase family. Type 1 subfamily. As to quaternary structure, homotetramer.

The protein resides in the cytoplasm. The catalysed reaction is L-citrulline + L-aspartate + ATP = 2-(N(omega)-L-arginino)succinate + AMP + diphosphate + H(+). It participates in amino-acid biosynthesis; L-arginine biosynthesis; L-arginine from L-ornithine and carbamoyl phosphate: step 2/3. This chain is Argininosuccinate synthase, found in Methanococcoides burtonii (strain DSM 6242 / NBRC 107633 / OCM 468 / ACE-M).